The following is a 123-amino-acid chain: Small ribosomal subunit protein uS12 (123 aa).

Positions 1-24 are disordered; that stretch reads MPTINQLIRKERKKQVKKSKSPAL. Positions 10-20 are enriched in basic residues; that stretch reads KERKKQVKKSK. D89 is modified (3-methylthioaspartic acid).

This sequence belongs to the universal ribosomal protein uS12 family. As to quaternary structure, part of the 30S ribosomal subunit. Contacts proteins S8 and S17. May interact with IF1 in the 30S initiation complex.

With S4 and S5 plays an important role in translational accuracy. Functionally, interacts with and stabilizes bases of the 16S rRNA that are involved in tRNA selection in the A site and with the mRNA backbone. Located at the interface of the 30S and 50S subunits, it traverses the body of the 30S subunit contacting proteins on the other side and probably holding the rRNA structure together. The combined cluster of proteins S8, S12 and S17 appears to hold together the shoulder and platform of the 30S subunit. This chain is Small ribosomal subunit protein uS12, found in Sulfurovum sp. (strain NBC37-1).